A 312-amino-acid chain; its full sequence is Aspartoacylase (312 aa).

Positions 20 and 23 each coordinate Zn(2+). Arg62, Asn69, and Arg70 together coordinate N-acetyl-L-aspartate. Position 115 (His115) interacts with Zn(2+). Tyr163 and Arg167 together coordinate N-acetyl-L-aspartate. The Proton donor/acceptor role is filled by Glu177. Tyr287 contributes to the N-acetyl-L-aspartate binding site.

The protein belongs to the AspA/AstE family. Aspartoacylase subfamily. Homodimer. Zn(2+) serves as cofactor.

The protein localises to the cytoplasm. It is found in the nucleus. It carries out the reaction an N-acyl-L-aspartate + H2O = a carboxylate + L-aspartate. The catalysed reaction is N-acetyl-L-aspartate + H2O = L-aspartate + acetate. Its function is as follows. Catalyzes the deacetylation of N-acetylaspartic acid (NAA) to produce acetate and L-aspartate. NAA occurs in high concentration in brain and its hydrolysis NAA plays a significant part in the maintenance of intact white matter. In other tissues it acts as a scavenger of NAA from body fluids. This Mus musculus (Mouse) protein is Aspartoacylase.